Reading from the N-terminus, the 94-residue chain is Probable FAD-linked sulfhydryl oxidase FPV093 (94 aa).

The 94-residue stretch at 1-94 (MDPRYWGSSF…IDIKKVKKLI (94 aa)) folds into the ERV/ALR sulfhydryl oxidase domain. Residues cysteine 41 and cysteine 44 are joined by a disulfide bond.

This sequence belongs to the poxviruses E10 family. FAD is required as a cofactor.

It catalyses the reaction 2 R'C(R)SH + O2 = R'C(R)S-S(R)CR' + H2O2. Its function is as follows. FAD-dependent sulfhydryl oxidase that catalyzes disulfide bond formation. In Fowlpox virus (strain NVSL) (FPV), this protein is Probable FAD-linked sulfhydryl oxidase FPV093.